We begin with the raw amino-acid sequence, 287 residues long: Phosphoribosylaminoimidazole-succinocarboxamide synthase (287 aa).

The protein belongs to the SAICAR synthetase family.

The catalysed reaction is 5-amino-1-(5-phospho-D-ribosyl)imidazole-4-carboxylate + L-aspartate + ATP = (2S)-2-[5-amino-1-(5-phospho-beta-D-ribosyl)imidazole-4-carboxamido]succinate + ADP + phosphate + 2 H(+). It participates in purine metabolism; IMP biosynthesis via de novo pathway; 5-amino-1-(5-phospho-D-ribosyl)imidazole-4-carboxamide from 5-amino-1-(5-phospho-D-ribosyl)imidazole-4-carboxylate: step 1/2. In Neisseria meningitidis serogroup A / serotype 4A (strain DSM 15465 / Z2491), this protein is Phosphoribosylaminoimidazole-succinocarboxamide synthase.